The following is a 152-amino-acid chain: Transcriptional regulator MraZ (152 aa).

2 consecutive SpoVT-AbrB domains span residues 5–52 and 81–124; these read ATLV…PLPA and ASEC…DEQT.

This sequence belongs to the MraZ family. In terms of assembly, forms oligomers.

It is found in the cytoplasm. The protein localises to the nucleoid. Its function is as follows. Negatively regulates its own expression and that of the subsequent genes in the proximal part of the division and cell wall (dcw) gene cluster. Acts by binding directly to DNA. May also regulate the expression of genes outside the dcw cluster. This Sodalis glossinidius (strain morsitans) protein is Transcriptional regulator MraZ.